The following is a 200-amino-acid chain: Mediator of RNA polymerase II transcription subunit 22 (200 aa).

Residues 93–122 are a coiled coil; it reads SVNEAIDQRNQQLRALQEECDRKLITLRDE. Residues 169–200 are disordered; it reads PLLASPETGAGPLQSAAPVHSHGGGPGPTEHT. Over residues 190-200 the composition is skewed to gly residues; it reads HGGGPGPTEHT.

It belongs to the Mediator complex subunit 22 family. As to quaternary structure, component of the Mediator complex, which is composed of MED1, MED4, MED6, MED7, MED8, MED9, MED10, MED11, MED12, MED13, MED13L, MED14, MED15, MED16, MED17, MED18, MED19, MED20, MED21, MED22, MED23, MED24, MED25, MED26, MED27, MED29, MED30, MED31, CCNC, CDK8 and CDC2L6/CDK11. The MED12, MED13, CCNC and CDK8 subunits form a distinct module termed the CDK8 module. Mediator containing the CDK8 module is less active than Mediator lacking this module in supporting transcriptional activation. Individual preparations of the Mediator complex lacking one or more distinct subunits have been variously termed ARC, CRSP, DRIP, PC2, SMCC and TRAP.

Its subcellular location is the nucleus. Functionally, component of the Mediator complex, a coactivator involved in the regulated transcription of nearly all RNA polymerase II-dependent genes. Mediator functions as a bridge to convey information from gene-specific regulatory proteins to the basal RNA polymerase II transcription machinery. Mediator is recruited to promoters by direct interactions with regulatory proteins and serves as a scaffold for the assembly of a functional preinitiation complex with RNA polymerase II and the general transcription factors. This chain is Mediator of RNA polymerase II transcription subunit 22 (Med22), found in Mus musculus (Mouse).